An 87-amino-acid chain; its full sequence is Putative regulatory protein BCQ_3657 (87 aa).

It belongs to the RemA family.

The chain is Putative regulatory protein BCQ_3657 from Bacillus cereus (strain Q1).